We begin with the raw amino-acid sequence, 963 residues long: Protocadherin alpha-C1 (963 aa).

The N-terminal stretch at 1–18 (MVGCGVAVLCLWVSCGAA) is a signal peptide. Cadherin domains lie at 19–124 (AGQL…SPLF), 125–233 (PAGD…APVF), 234–340 (ERSV…APEL), 349–445 (VPED…TPNF), and 446–555 (PQPQ…YPVI). The Extracellular segment spans residues 19-683 (AGQLEYSVPE…GGQLSAQNLY (665 aa)). Asn38 carries N-linked (GlcNAc...) asparagine glycosylation. 2 N-linked (GlcNAc...) asparagine glycosylation sites follow: Asn248 and Asn274. A glycan (N-linked (GlcNAc...) asparagine) is linked at Asn562. Positions 570-667 (VPRSARTGHL…NSVPQLLPDF (98 aa)) constitute a Cadherin 6 domain. The chain crosses the membrane as a helical span at residues 684-704 (LVIALACISFLFLGCLLFFVC). The Cytoplasmic portion of the chain corresponds to 705–963 (TKLHQSPGCC…GNSTTDNSDQ (259 aa)). PXXP repeat units lie at residues 812–815 (PRQP), 845–848 (PGGP), 886–889 (PGNP), and 904–907 (PGSP). Positions 812 to 907 (PRQPNPDWRY…PDKFIIPGSP (96 aa)) are 4 X 4 AA repeats of P-X-X-P. The segment at 844–963 (GPGGPDQQWP…GNSTTDNSDQ (120 aa)) is disordered. Residues 922-936 (DKSDFITFGKKEETK) are compositionally biased toward basic and acidic residues.

Its subcellular location is the cell membrane. Its function is as follows. Potential calcium-dependent cell-adhesion protein. May be involved in the establishment and maintenance of specific neuronal connections in the brain. The sequence is that of Protocadherin alpha-C1 (PCDHAC1) from Homo sapiens (Human).